We begin with the raw amino-acid sequence, 163 residues long: Nucleotide-binding protein MUL_0671 (163 aa).

It belongs to the YajQ family.

Functionally, nucleotide-binding protein. The polypeptide is Nucleotide-binding protein MUL_0671 (Mycobacterium ulcerans (strain Agy99)).